The sequence spans 455 residues: Retinoic acid receptor beta (455 aa).

The segment at 1–87 is modulating; it reads MTTSSRTCPV…PLPPPRVYKP (87 aa). A disordered region spans residues 44-78; that stretch reads LQSHPPTSGCSTPSPATVETQSTSSEELVPSPPSP. Positions 47-66 are enriched in polar residues; it reads HPPTSGCSTPSPATVETQST. 2 consecutive NR C4-type zinc fingers follow at residues 88 to 108 and 124 to 148; these read CFVCQDKSSGYHYGVSACEGC and CHRDKNCVINKVTRNRCQYCRLQKC. Residues 88-153 constitute a DNA-binding region (nuclear receptor); it reads CFVCQDKSSG…RLQKCFEVGM (66 aa). The segment at 154–182 is hinge; sequence SKESVRNDRNKKKKEPTKQESTENYEMTA. In terms of domain architecture, NR LBD spans 183-417; the sequence is ELDDLTEKIR…PLIQEMLENS (235 aa). A disordered region spans residues 416 to 455; it reads NSEGHEPLTPTSNGNTAEHSPSISPSSVDNSSVSQSPMVQ. The segment covering 424–434 has biased composition (polar residues); sequence TPTSNGNTAEH. A compositionally biased stretch (low complexity) spans 435 to 455; sequence SPSISPSSVDNSSVSQSPMVQ.

Belongs to the nuclear hormone receptor family. NR1 subfamily. As to quaternary structure, heterodimer; with a RXR molecule. Binds DNA preferentially as a RAR/RXR heterodimer.

The protein resides in the nucleus. Its function is as follows. Receptor for retinoic acid. Retinoic acid receptors bind as heterodimers to their target response elements in response to their ligands, all-trans or 9-cis retinoic acid, and regulate gene expression in various biological processes. The RAR/RXR heterodimers bind to the retinoic acid response elements (RARE) composed of tandem 5'-AGGTCA-3' sites known as DR1-DR5. Required for limb and craniofacial development. This chain is Retinoic acid receptor beta (RARB), found in Gallus gallus (Chicken).